The primary structure comprises 637 residues: ATP-dependent rRNA helicase SPB4 (637 aa).

The short motif at 14 to 42 (WDTLNPPLSEWIRDAVATMGFDQMTPVQA) is the Q motif element. Residues 45–247 (LPHFMGNKDV…RVGLRNPVKI (203 aa)) enclose the Helicase ATP-binding domain. 58–65 (AVTGSGKT) contacts ATP. The DEAD box signature appears at 195–198 (DEAD). The Helicase C-terminal domain occupies 283–438 (ALAELLRQLP…TITTSEDDAA (156 aa)). Residues 524–631 (KEKTREQQRK…AAAKQEKDGE (108 aa)) are a coiled coil. Basic and acidic residues-rich tracts occupy residues 535–553 (ALEE…EEFK), 563–576 (SAKH…VERR), 583–618 (RDAE…EKAA), and 625–637 (KQEK…GFDD). The tract at residues 535-637 (ALEEEKSGVK…KDGEFKGFDD (103 aa)) is disordered.

This sequence belongs to the DEAD box helicase family. DDX55/SPB4 subfamily. As to quaternary structure, component of pre-60S ribosomal complexes.

It localises to the nucleus. The protein localises to the nucleolus. It carries out the reaction ATP + H2O = ADP + phosphate + H(+). Its function is as follows. ATP-binding RNA helicase involved in the biogenesis of 60S ribosomal subunits. Binds 90S pre-ribosomal particles and dissociates from pre-60S ribosomal particles after processing of 27SB pre-rRNA. Required for the normal formation of 18S rRNA through the processing of pre-rRNAs at sites A0, A1 and A2, and the normal formation of 25S and 5.8S rRNAs through the processing of pre-rRNAs at sites C1 and C2. This is ATP-dependent rRNA helicase SPB4 from Gibberella zeae (strain ATCC MYA-4620 / CBS 123657 / FGSC 9075 / NRRL 31084 / PH-1) (Wheat head blight fungus).